The primary structure comprises 200 residues: Adenine phosphoribosyltransferase (200 aa).

It belongs to the purine/pyrimidine phosphoribosyltransferase family. As to quaternary structure, homodimer.

The protein resides in the cytoplasm. The enzyme catalyses AMP + diphosphate = 5-phospho-alpha-D-ribose 1-diphosphate + adenine. The protein operates within purine metabolism; AMP biosynthesis via salvage pathway; AMP from adenine: step 1/1. Functionally, catalyzes a salvage reaction resulting in the formation of AMP, that is energically less costly than de novo synthesis. The protein is Adenine phosphoribosyltransferase of Sorangium cellulosum (strain So ce56) (Polyangium cellulosum (strain So ce56)).